The sequence spans 138 residues: ATP synthase epsilon chain (138 aa).

Belongs to the ATPase epsilon chain family. In terms of assembly, F-type ATPases have 2 components, CF(1) - the catalytic core - and CF(0) - the membrane proton channel. CF(1) has five subunits: alpha(3), beta(3), gamma(1), delta(1), epsilon(1). CF(0) has three main subunits: a, b and c.

The protein resides in the cell inner membrane. Produces ATP from ADP in the presence of a proton gradient across the membrane. The chain is ATP synthase epsilon chain from Vesicomyosocius okutanii subsp. Calyptogena okutanii (strain HA).